We begin with the raw amino-acid sequence, 1063 residues long: MPTLVVGTPPTCLGDTPQPCHKNSQRQGPFSHGAPGRAADWKAVAKPRLCAPAAEDDVAALRWPGPSQQPDPPWAAPHVVGSDDLKEPGPWGKACSLPMWSTGPEARDGDSSVSSGRLSCSSGGHDVCVSWKERPPQVLGPQQRPRKSDARLEQLRDKIRAQAWQQGSCASLGTSAPSSASRLHKASTLMLRRKGQEAKNPPPAPECSGFSILSAAERRVEAKASHGQGRELSRVSQHQVPVLREKPKRVKSSSCKREKTPKLPSPRRAAKDKHKDEDSELVGVYAWRKGQALVRSLLGPPPVLRRHHSKDPSRDPALTVDLGDSEKVIAAKCSPVCAQLPDATSAYSDQQVSGNTPSLASFDQPATIQTAMAILQDLRQQIQAGLELAQARKGGQELGPSKRRLQDVAGRGCCRDPNAQSSFSKSPWAMTERKHSSLERARSVHTWEPWSSSTARESCPQRAWGAQGQDRSFQRPESPHERLGHFSQRPWSALAGQACSPQRAWGAQRQGPSSQRPGSPPEKRSPFPQQPWSAVATQPCPRRAWTACETWEDPGPRLRNPLERPSPPAQRPWSSSGVQRAGPQGKGRGIGSPVSAAKHALPRPTGSFPQNPLGKEKDTLRPCPRSRGLLGPSHSSESLREFMRQKAQARRRQALEEKASALRTRELRSRRLQEVYRQQREAVLGRAVPVVSRTTPGIVTFVPSSAQSGGLEASGSLESPVLEWSKVTSGMVLGGQEAPGSFCLCLNRAWNHAETLDPPGMGGPQDGRDAPVLLSASPSLGSLELQDLTTRYLPRGMCIYLDPKEAEHLGTSSSLHLRHKQAQLQALETTAKVLKQRVDSLTAKLQGAEALDTVRDPAVGLLRSCPHSLPAAPTLATPTLATPACPGALGPNWGRGAPGEWVSMQPQPLLPPTYFLDGETLSWGPSWEQQQSVSPRAHCESKPRGFPEEGHVDVKPDKRLQRGVAPFQALSPSAGSSYAGPATLHPIWGSLGLEETPSVGGADSVAPCTPRSCGKGDPADRPWAGWSGGRGIHREHLPLPSTRAWPYGVEKSFSTWRASTPRY.

7 disordered regions span residues 1–41 (MPTL…AADW), 62–184 (RWPG…SRLH), 219–278 (RVEA…KDED), 300–319 (PPPV…PALT), 392–484 (RKGG…ERLG), 496–539 (GQAC…ATQP), and 551–658 (WEDP…LEEK). The segment covering 111–124 (SSVSSGRLSCSSGG) has biased composition (low complexity). The segment covering 146-160 (RKSDARLEQLRDKIR) has biased composition (basic and acidic residues). Residues 163–181 (AWQQGSCASLGTSAPSSAS) are compositionally biased toward polar residues. Over residues 219–233 (RVEAKASHGQGRELS) the composition is skewed to basic and acidic residues. 2 stretches are compositionally biased toward basic and acidic residues: residues 431-442 (TERKHSSLERAR) and 472-484 (SFQR…ERLG). A compositionally biased stretch (low complexity) spans 508-517 (QRQGPSSQRP). A coiled-coil region spans residues 816–851 (HLRHKQAQLQALETTAKVLKQRVDSLTAKLQGAEAL). Residues 1010 to 1030 (PRSCGKGDPADRPWAGWSGGR) are disordered.

The sequence is that of Coiled-coil domain-containing protein 187 from Homo sapiens (Human).